Reading from the N-terminus, the 118-residue chain is UPF0295 protein BCE33L0445 (118 aa).

The next 2 membrane-spanning stretches (helical) occupy residues 12–32 (IRTF…LGVF) and 43–63 (FMMV…WIGM).

The protein belongs to the UPF0295 family.

The protein resides in the cell membrane. In Bacillus cereus (strain ZK / E33L), this protein is UPF0295 protein BCE33L0445.